Reading from the N-terminus, the 211-residue chain is Large ribosomal subunit protein uL4 (211 aa).

The interval 63–94 is disordered; that stretch reads RFGRQKGGGTARHGARSAPQFVGGGKAHGPRV.

This sequence belongs to the universal ribosomal protein uL4 family. Part of the 50S ribosomal subunit.

Functionally, one of the primary rRNA binding proteins, this protein initially binds near the 5'-end of the 23S rRNA. It is important during the early stages of 50S assembly. It makes multiple contacts with different domains of the 23S rRNA in the assembled 50S subunit and ribosome. Its function is as follows. Forms part of the polypeptide exit tunnel. The sequence is that of Large ribosomal subunit protein uL4 from Maricaulis maris (strain MCS10) (Caulobacter maris).